A 461-amino-acid chain; its full sequence is Homocitrate synthase (461 aa).

A Pyruvate carboxyltransferase domain is found at 4 to 259 (VGILDSTLRE…IEVVKLDKLQ (256 aa)). A 2-oxoglutarate-binding site is contributed by R12. Residue E13 coordinates Mg(2+). H76, R136, and T170 together coordinate 2-oxoglutarate. The Mg(2+) site is built by H198 and H200. H292 serves as the catalytic Proton acceptor.

This sequence belongs to the alpha-IPM synthase/homocitrate synthase family. Homocitrate synthase LYS20/LYS21 subfamily. Requires Mg(2+) as cofactor. The cofactor is Mn(2+).

It catalyses the reaction acetyl-CoA + 2-oxoglutarate + H2O = (2R)-homocitrate + CoA + H(+). It functions in the pathway amino-acid biosynthesis; L-lysine biosynthesis via AAA pathway; L-alpha-aminoadipate from 2-oxoglutarate: step 1/5. Catalyzes the aldol-type condensation of 2-oxoglutarate with acetyl-CoA to yield homocitrate. Carries out the first step of the alpha-aminoadipate (AAA) lysine biosynthesis pathway. This is Homocitrate synthase from Saccharolobus islandicus (strain Y.N.15.51 / Yellowstone #2) (Sulfolobus islandicus).